The sequence spans 545 residues: Solute carrier family 22 member 6 (545 aa).

Topologically, residues 1–9 (MAFNDLLKQ) are cytoplasmic. A helical transmembrane segment spans residues 10–30 (VGGVGRFQLIQVTMVVAPLLL). At 31–129 (MASHNTLQNF…LVCSHRAFRQ (99 aa)) the chain is on the extracellular side. 5 N-linked (GlcNAc...) asparagine glycosylation sites follow: asparagine 39, asparagine 56, asparagine 86, asparagine 91, and asparagine 107. A helical membrane pass occupies residues 130–150 (LAQSLFMVGVLLGAMMFGYLA). The Cytoplasmic segment spans residues 151 to 157 (DRLGRRK). Residues 158–177 (VLILNYLQTAVSGTCAAYAP) form a helical membrane-spanning segment. A glycan (N-linked (GlcNAc...) asparagine) is linked at asparagine 178. Residues 178–180 (NYT) lie on the Extracellular side of the membrane. Residues 181-201 (VYCIFRLLSGMSLASIAINCM) traverse the membrane as a helical segment. Over 202–218 (TLNMEWMPIHTRAYVGT) the chain is Cytoplasmic. The helical transmembrane segment at 219–239 (LIGYVYSLGQFLLAGIAYAVP) threads the bilayer. At 240–242 (HWR) the chain is on the extracellular side. Residues 243 to 263 (HLQLAVSVPFFVAFIYSWFFI) traverse the membrane as a helical segment. The Cytoplasmic portion of the chain corresponds to 264-331 (ESARWYSSSG…ELLRCPTLRR (68 aa)). Residues 332–352 (LFLCLSMLWFATSFAYYGLVM) form a helical membrane-spanning segment. Residues 353–362 (DLQGFGVSMY) are Extracellular-facing. A helical membrane pass occupies residues 363 to 383 (LIQVIFGAVDLPAKFVCFLVI). Topologically, residues 384-389 (NSMGRR) are cytoplasmic. A helical membrane pass occupies residues 390 to 410 (PAQLASLLLAGICILVNGIIP). The Extracellular portion of the chain corresponds to 411 to 419 (RGHTIIRTS). The chain crosses the membrane as a helical span at residues 420–440 (LAVLGKGCLASSFNCIFLYTG). Residues 441 to 450 (ELYPTMIRQT) lie on the Cytoplasmic side of the membrane. The chain crosses the membrane as a helical span at residues 451–471 (GLGMGSTMARVGSIVSPLISM). Topologically, residues 472–478 (TAEFYPS) are extracellular. A helical transmembrane segment spans residues 479 to 499 (IPLFIFGAVPVAASAVTALLP). Residues 500 to 545 (ETLGQPLPDTVQDLKSRSRGKQKQQQLEQQKQMIPLQVSTQEKNGL) lie on the Cytoplasmic side of the membrane. Residues 515–545 (SRSRGKQKQQQLEQQKQMIPLQVSTQEKNGL) form a disordered region. The span at 522 to 531 (KQQQLEQQKQ) shows a compositional bias: low complexity. A compositionally biased stretch (polar residues) spans 536-545 (QVSTQEKNGL).

It belongs to the major facilitator (TC 2.A.1) superfamily. Organic cation transporter (TC 2.A.1.19) family. Glycosylated. Glycosylation is necessary for proper targeting of the transporter to the plasma membrane. As to expression, expressed in kidney. In kidney, restricted to the proximal convoluted tubule (representing S1 and S2 segments). In brain, expressed in neurons of the cortex cerebri and hippocampus as well as in the ependymal cell layer of the choroid plexus.

It localises to the basolateral cell membrane. It is found in the basal cell membrane. It carries out the reaction (6R)-L-erythro-5,6,7,8-tetrahydrobiopterin(out) + a dicarboxylate(in) = (6R)-L-erythro-5,6,7,8-tetrahydrobiopterin(in) + a dicarboxylate(out). It catalyses the reaction L-erythro-7,8-dihydrobiopterin(out) + a dicarboxylate(in) = L-erythro-7,8-dihydrobiopterin(in) + a dicarboxylate(out). The catalysed reaction is L-sepiapterin(out) + a dicarboxylate(in) = L-sepiapterin(in) + a dicarboxylate(out). The enzyme catalyses prostaglandin F2alpha(out) + a dicarboxylate(in) = prostaglandin F2alpha(in) + a dicarboxylate(out). It carries out the reaction prostaglandin E2(out) + a dicarboxylate(in) = prostaglandin E2(in) + a dicarboxylate(out). It catalyses the reaction 3',5'-cyclic AMP(out) + a dicarboxylate(in) = 3',5'-cyclic AMP(in) + a dicarboxylate(out). The catalysed reaction is 3',5'-cyclic GMP(out) + a dicarboxylate(in) = 3',5'-cyclic GMP(in) + a dicarboxylate(out). The enzyme catalyses urate(out) + a dicarboxylate(in) = urate(in) + a dicarboxylate(out). It carries out the reaction kynurenate(out) + glutarate(in) = kynurenate(in) + glutarate(out). It catalyses the reaction (indol-3-yl)acetate(out) + a dicarboxylate(in) = (indol-3-yl)acetate(in) + a dicarboxylate(out). The catalysed reaction is indoxyl sulfate(out) + a dicarboxylate(in) = indoxyl sulfate(in) + a dicarboxylate(out). The enzyme catalyses N-benzoylglycine(out) + a dicarboxylate(in) = N-benzoylglycine(in) + a dicarboxylate(out). It carries out the reaction 3-carboxy-4-methyl-5-propyl-2-furanpropanoate(out) + a dicarboxylate(in) = 3-carboxy-4-methyl-5-propyl-2-furanpropanoate(in) + a dicarboxylate(out). Secondary active transporter that functions as a Na(+)-independent organic anion (OA)/dicarboxylate antiporter where the uptake of one molecule of OA into the cell is coupled with an efflux of one molecule of intracellular dicarboxylate such as 2-oxoglutarate or glutarate. Mediates the uptake of OA across the basolateral side of proximal tubule epithelial cells, thereby contributing to the renal elimination of endogenous OA from the systemic circulation into the urine. Functions as a biopterin transporters involved in the uptake and the secretion of coenzymes tetrahydrobiopterin (BH4), dihydrobiopterin (BH2) and sepiapterin to urine, thereby determining baseline levels of blood biopterins. Transports prostaglandin E2 (PGE2) and prostaglandin F2-alpha (PGF2-alpha) and may contribute to their renal excretion. Involved in the transport of neuroactive tryptophan metabolites kynurenate (KYNA) and xanthurenate (XA). May transport glutamate. Also involved in the disposition of uremic toxins and potentially toxic xenobiotics by the renal organic anion secretory pathway, helping reduce their undesired toxicological effects on the body. Uremic toxins include the indoxyl sulfate (IS), hippurate/N-benzoylglycine (HA), indole acetate (IA) and 3-carboxy-4- methyl-5-propyl-2-furanpropionate(CMPF) and urate. Xenobiotics include the mycotoxin ochratoxin (OTA). May also contribute to the transport of organic compounds in testes across the blood-testis-barrier. The polypeptide is Solute carrier family 22 member 6 (Mus musculus (Mouse)).